Here is a 663-residue protein sequence, read N- to C-terminus: DNA topoisomerase 1 (663 aa).

In terms of domain architecture, Toprim spans 4–137 (SWLIITEKDN…TVKVDRVRYS (134 aa)). The Mg(2+) site is built by E10 and D106. The Topo IA-type catalytic domain maps to 155–558 (DFNLANAALA…ESREMLLQIL (404 aa)). An interaction with DNA region spans residues 193-198 (SVGRVQ). Y306 acts as the O-(5'-phospho-DNA)-tyrosine intermediate in catalysis. The segment at 583–610 (CPECGGELVVRQSKAGKRFIGCSNYPDC) adopts a C4-type 1 zinc-finger fold. A C4-type 2; atypical zinc finger spans residues 629–653 (CKEHEIKEVKIRTKKGYWNLGCPYC).

It belongs to the type IA topoisomerase family. In terms of assembly, monomer. Mg(2+) serves as cofactor.

It catalyses the reaction ATP-independent breakage of single-stranded DNA, followed by passage and rejoining.. In terms of biological role, releases the supercoiling and torsional tension of DNA, which is introduced during the DNA replication and transcription, by transiently cleaving and rejoining one strand of the DNA duplex. Introduces a single-strand break via transesterification at a target site in duplex DNA. The scissile phosphodiester is attacked by the catalytic tyrosine of the enzyme, resulting in the formation of a DNA-(5'-phosphotyrosyl)-enzyme intermediate and the expulsion of a 3'-OH DNA strand. The free DNA strand then undergoes passage around the unbroken strand, thus removing DNA supercoils. Finally, in the religation step, the DNA 3'-OH attacks the covalent intermediate to expel the active-site tyrosine and restore the DNA phosphodiester backbone. The polypeptide is DNA topoisomerase 1 (Archaeoglobus fulgidus (strain ATCC 49558 / DSM 4304 / JCM 9628 / NBRC 100126 / VC-16)).